Consider the following 840-residue polypeptide: MGLFDKIFGSYSDREVKRITPIVDKIDSLGPEMEKLSDEELKQKTFEFKDRYAKGESLDDMLPEAFAVCREASTRVLGMKHYREQLIGGTVLHQGRIAEMKTGEGKTLVATLPVYLNAIAGKGVHVITVNDYLATRDKEWMGQLYEFLGLTTGVIVHGLTNDQRREAYNADITYGTNNEFGFDYLRDNMVIYKEERVQRPLHYCIVDEVDSILIDEARTPLIISGAGSKSTDLYKIADFFVKKLREEEDYTIDEKAHAAMLTDKGVAEAEKAFGIENYADANNMELQHHITQALKANYVMKRDKDYMVKDDEIAIVDEFTGRLMEGRRYSDGLHQAIEAKEGVKVQRESKTLATITFQNYFRMYTKLAGMTGTALTEETEFREIYGLDVVVIPTHRPVQREDHSDLVFKTAKGKYDAIVEEIIETHKTGQPVLVGTTSIEKSEYLSSLLKKKGVPHKVLNARYHEQEAEIVSHAGELGNITIATNMAGRGTDIKLGEGVLEVGGLKIIGTERHESRRIDNQLRGRSGRQGDKGHSRFYISLEDDLMRIFGSEKLQSVVDRLGLEETEAIESKMVTKSIENAQKKVEGNNFDIRKTLLGYDDVMNKQREVIYKQRSQVLEGENLEDSVQAMIEDVVTSAVQAHLGNIDEDDFEKELGDLIKYLEDIMLPHGKFTVEELKTSSNEEITRKFIECAREIYKEKEEFVGSEQMREIERVIILRVVDTKWMDHIDDMDHLKQGIGLRAYKQQDPTQAYQMEGSAMFDEMINNIKIDTVRYLFHVKVEAEKPQRERVAKETGASHGGDSQEVKKKPVKKEPKVGRNDLCPCGSGKKYKSCCGREVV.

ATP is bound by residues Gln-85, 103–107, and Asp-492; that span reads GEGKT. Residues 787 to 822 form a disordered region; it reads QRERVAKETGASHGGDSQEVKKKPVKKEPKVGRNDL. Over residues 802 to 819 the composition is skewed to basic and acidic residues; that stretch reads DSQEVKKKPVKKEPKVGR. Cys-823, Cys-825, Cys-834, and Cys-835 together coordinate Zn(2+).

It belongs to the SecA family. In terms of assembly, monomer and homodimer. Part of the essential Sec protein translocation apparatus which comprises SecA, SecYEG and auxiliary proteins SecDF. Other proteins may also be involved. Zn(2+) is required as a cofactor.

It is found in the cell membrane. The protein localises to the cytoplasm. It carries out the reaction ATP + H2O + cellular proteinSide 1 = ADP + phosphate + cellular proteinSide 2.. In terms of biological role, part of the Sec protein translocase complex. Interacts with the SecYEG preprotein conducting channel. Has a central role in coupling the hydrolysis of ATP to the transfer of proteins into and across the cell membrane, serving as an ATP-driven molecular motor driving the stepwise translocation of polypeptide chains across the membrane. This chain is Protein translocase subunit SecA, found in Clostridium perfringens (strain ATCC 13124 / DSM 756 / JCM 1290 / NCIMB 6125 / NCTC 8237 / Type A).